The chain runs to 236 residues: uncharacterized protein (236 aa).

This is an uncharacterized protein from Aquifex aeolicus (strain VF5).